The following is a 354-amino-acid chain: UDP-N-acetylglucosamine--N-acetylmuramyl-(pentapeptide) pyrophosphoryl-undecaprenol N-acetylglucosamine transferase (354 aa).

UDP-N-acetyl-alpha-D-glucosamine is bound by residues 13 to 15 (SGG), Asn-125, Ser-189, Ile-242, 261 to 266 (ALTVSE), and Gln-286.

It belongs to the glycosyltransferase 28 family. MurG subfamily.

It localises to the cell inner membrane. The catalysed reaction is di-trans,octa-cis-undecaprenyl diphospho-N-acetyl-alpha-D-muramoyl-L-alanyl-D-glutamyl-meso-2,6-diaminopimeloyl-D-alanyl-D-alanine + UDP-N-acetyl-alpha-D-glucosamine = di-trans,octa-cis-undecaprenyl diphospho-[N-acetyl-alpha-D-glucosaminyl-(1-&gt;4)]-N-acetyl-alpha-D-muramoyl-L-alanyl-D-glutamyl-meso-2,6-diaminopimeloyl-D-alanyl-D-alanine + UDP + H(+). It functions in the pathway cell wall biogenesis; peptidoglycan biosynthesis. Functionally, cell wall formation. Catalyzes the transfer of a GlcNAc subunit on undecaprenyl-pyrophosphoryl-MurNAc-pentapeptide (lipid intermediate I) to form undecaprenyl-pyrophosphoryl-MurNAc-(pentapeptide)GlcNAc (lipid intermediate II). This Buchnera aphidicola subsp. Acyrthosiphon pisum (strain APS) (Acyrthosiphon pisum symbiotic bacterium) protein is UDP-N-acetylglucosamine--N-acetylmuramyl-(pentapeptide) pyrophosphoryl-undecaprenol N-acetylglucosamine transferase.